Consider the following 217-residue polypeptide: Deoxyribose-phosphate aldolase (217 aa).

Aspartate 90 functions as the Proton donor/acceptor in the catalytic mechanism. Lysine 152 (schiff-base intermediate with acetaldehyde) is an active-site residue. Residue lysine 181 is the Proton donor/acceptor of the active site.

It belongs to the DeoC/FbaB aldolase family. DeoC type 1 subfamily.

The protein localises to the cytoplasm. The enzyme catalyses 2-deoxy-D-ribose 5-phosphate = D-glyceraldehyde 3-phosphate + acetaldehyde. Its pathway is carbohydrate degradation; 2-deoxy-D-ribose 1-phosphate degradation; D-glyceraldehyde 3-phosphate and acetaldehyde from 2-deoxy-alpha-D-ribose 1-phosphate: step 2/2. In terms of biological role, catalyzes a reversible aldol reaction between acetaldehyde and D-glyceraldehyde 3-phosphate to generate 2-deoxy-D-ribose 5-phosphate. The chain is Deoxyribose-phosphate aldolase from Metamycoplasma hominis (Mycoplasma hominis).